The chain runs to 308 residues: Taste receptor type 2 member 43 (308 aa).

A topological domain (extracellular) is located at residue Met-1. The chain crosses the membrane as a helical span at residues 2–22; the sequence is ITFLPIIFSILVVVTFVIGNC. The Cytoplasmic segment spans residues 23-46; that stretch reads ANGFIALVNSTEWVKRQKISFADQ. Residues 47 to 67 form a helical membrane-spanning segment; the sequence is ILTALAVSRVGLLWVLLLNWY. Residues 68–86 lie on the Extracellular side of the membrane; the sequence is ATVLNPAFYSVEVRTIVYN. Residues 87-107 traverse the membrane as a helical segment; the sequence is LWAVINHFSNWLATSLSIFYL. Residues 108–126 lie on the Cytoplasmic side of the membrane; that stretch reads LKIANFSNLIFLHLKRRVK. Residues 127-147 traverse the membrane as a helical segment; the sequence is SVVLVILLGPLLFLVCHLFVV. At 148-178 the chain is on the extracellular side; that stretch reads NMNEIVRTKEYEGNMTWKSKLRSAMYLSNTT. 2 N-linked (GlcNAc...) asparagine glycosylation sites follow: Asn-161 and Asn-176. Residues 179–199 traverse the membrane as a helical segment; sequence VTILANLVPFILTLISFLLLI. At 200–229 the chain is on the cytoplasmic side; sequence CSLCKHLKKMQLRDKGSQDPSTKVHIKALQ. Residues 230 to 249 traverse the membrane as a helical segment; the sequence is TVISLLLCVIYFLSIMISSW. The Extracellular segment spans residues 250–258; the sequence is SLGRVENKA. The chain crosses the membrane as a helical span at residues 259 to 279; it reads VFMFCKAIRFSYPSAHAFILI. The Cytoplasmic segment spans residues 280 to 308; it reads WGNKKLKQTLLSVLWNVRYCVKGQKLPSP.

The protein belongs to the G-protein coupled receptor T2R family.

Its subcellular location is the membrane. It localises to the cell projection. It is found in the cilium membrane. Its function is as follows. Gustducin-coupled receptor immplicated in the perception of bitter compounds in the oral cavity and the gastrointestinal tract. Signals through PLCB2 and the calcium-regulated cation channel TRPM5. Activated by the sulfonyl amide sweeteners saccharin and acesulfame K. In airway epithelial cells, binding of bitter compounds increases the intracellular calcium ion concentration and stimulates ciliary beat frequency. May act as chemosensory receptors in airway epithelial cells to detect and eliminate potential noxious agents from the airways. The protein is Taste receptor type 2 member 43 (TAS2R43) of Papio hamadryas (Hamadryas baboon).